Consider the following 147-residue polypeptide: MSTVTLLGERLAEVGTEFVYGGETDACEGCPYREQCLNLTEGRRYRVTGVRDSGTLECAVHDTGVTAVEVEPAPVLANVDANAAYAGSKASLVGPCPYTECPSHEFCEPDGADFDEEYQITEVVGDPPHDYCMLDRELQLVQFAAEE.

It belongs to the UPF0179 family.

The polypeptide is UPF0179 protein NP_3406A (Natronomonas pharaonis (strain ATCC 35678 / DSM 2160 / CIP 103997 / JCM 8858 / NBRC 14720 / NCIMB 2260 / Gabara) (Halobacterium pharaonis)).